Reading from the N-terminus, the 196-residue chain is Large ribosomal subunit protein bL9c (196 aa).

Residues 1–41 (MASTTSTLSLSWSNSFHSFAGAISEPQKSPENCRVMLPIVA) constitute a chloroplast transit peptide.

As to quaternary structure, component of the chloroplast large ribosomal subunit (LSU). Mature 70S chloroplast ribosomes of higher plants consist of a small (30S) and a large (50S) subunit. The 30S small subunit contains 1 molecule of ribosomal RNA (16S rRNA) and 24 different proteins. The 50S large subunit contains 3 rRNA molecules (23S, 5S and 4.5S rRNA) and 33 different proteins.

It is found in the plastid. Its subcellular location is the chloroplast. Component of the chloroplast ribosome (chloro-ribosome), a dedicated translation machinery responsible for the synthesis of chloroplast genome-encoded proteins, including proteins of the transcription and translation machinery and components of the photosynthetic apparatus. The sequence is that of Large ribosomal subunit protein bL9c (RPL9) from Spinacia oleracea (Spinach).